Reading from the N-terminus, the 256-residue chain is Undecaprenyl-diphosphatase (256 aa).

Transmembrane regions (helical) follow at residues 8 to 28 (VLGI…GHLI), 41 to 61 (FVKS…VVLY), 75 to 95 (IIAA…LIKG), 96 to 116 (FLIG…IILI), 175 to 195 (AEFS…YDLI), 208 to 228 (ILII…KWFL), and 236 to 256 (LKIF…FFLF).

It belongs to the UppP family.

It is found in the cell inner membrane. It carries out the reaction di-trans,octa-cis-undecaprenyl diphosphate + H2O = di-trans,octa-cis-undecaprenyl phosphate + phosphate + H(+). Functionally, catalyzes the dephosphorylation of undecaprenyl diphosphate (UPP). Confers resistance to bacitracin. The protein is Undecaprenyl-diphosphatase of Aquifex aeolicus (strain VF5).